Consider the following 473-residue polypeptide: Homeobox protein ATH1 (473 aa).

The tract at residues 205–221 (SKYLHSVQEILSHFAAY) is SR/KY domain. Residues 266–336 (QRRALEAKKT…NLRERICKKI (71 aa)) form a BELL domain region. Residues 372–434 (IWRPQRGLPE…NARVRLWKPM (63 aa)) constitute a DNA-binding region (homeobox). The segment at 448–473 (NNSHIQPNGPTLRMPKSVMMSQAMHK) is disordered.

This sequence belongs to the TALE/BELL homeobox family. In terms of assembly, may form heterodimeric complex with the TALE/KNOX protein STM. As to expression, most abundant in flowers.

It is found in the nucleus. Its function is as follows. Transcription factor which may be involved in the signal transduction pathway downstream of the COP1 gene. Controls floral competency as a specific activator of FLC expression. Is responsive of the nuclear import of SHOOT MERISTEMLESS (STM). This is Homeobox protein ATH1 (ATH1) from Arabidopsis thaliana (Mouse-ear cress).